The following is a 428-amino-acid chain: Serine--tRNA ligase (428 aa).

231-233 is a binding site for L-serine; the sequence is TSE. ATP-binding positions include 262 to 264 and V278; that span reads RRE. E285 contacts L-serine. 349–352 contacts ATP; sequence ELTS. T384 is an L-serine binding site.

It belongs to the class-II aminoacyl-tRNA synthetase family. Type-1 seryl-tRNA synthetase subfamily. Homodimer. The tRNA molecule binds across the dimer.

Its subcellular location is the cytoplasm. It carries out the reaction tRNA(Ser) + L-serine + ATP = L-seryl-tRNA(Ser) + AMP + diphosphate + H(+). It catalyses the reaction tRNA(Sec) + L-serine + ATP = L-seryl-tRNA(Sec) + AMP + diphosphate + H(+). The protein operates within aminoacyl-tRNA biosynthesis; selenocysteinyl-tRNA(Sec) biosynthesis; L-seryl-tRNA(Sec) from L-serine and tRNA(Sec): step 1/1. Catalyzes the attachment of serine to tRNA(Ser). Is also able to aminoacylate tRNA(Sec) with serine, to form the misacylated tRNA L-seryl-tRNA(Sec), which will be further converted into selenocysteinyl-tRNA(Sec). In Bifidobacterium longum (strain DJO10A), this protein is Serine--tRNA ligase.